Here is a 73-residue protein sequence, read N- to C-terminus: Large ribosomal subunit protein bL28 (73 aa).

Belongs to the bacterial ribosomal protein bL28 family.

The chain is Large ribosomal subunit protein bL28 from Fervidobacterium nodosum (strain ATCC 35602 / DSM 5306 / Rt17-B1).